The sequence spans 585 residues: Probable monoterpene synthase MTS1, chloroplastic (585 aa).

Residues 1–29 form a disordered region; sequence MSLSGVPLSAGLAPSPSNKPTNGKGQNIV. Residues 1–31 constitute a chloroplast transit peptide; that stretch reads MSLSGVPLSAGLAPSPSNKPTNGKGQNIVRR. Residues 15-25 show a composition bias toward polar residues; it reads SPSNKPTNGKG. The (2E)-geranyl diphosphate site is built by Arg298, Asp335, Asp339, Arg476, and Asp479. Residues Asp335 and Asp339 each contribute to the Mg(2+) site. Residues 335-339 carry the DDXXD motif motif; it reads DDIYD. Residues Asp479, Thr483, and Glu487 each contribute to the Mg(2+) site.

The protein belongs to the terpene synthase family. Tpsb subfamily. Mg(2+) is required as a cofactor. The cofactor is Mn(2+). As to expression, expressed in trichomes. Detected in flowers, but not in leaves.

Its subcellular location is the plastid. It is found in the chloroplast. This is Probable monoterpene synthase MTS1, chloroplastic from Humulus lupulus (European hop).